Here is an 86-residue protein sequence, read N- to C-terminus: Neurotoxin LmNaTx35.2 (86 aa).

An N-terminal signal peptide occupies residues 1–21 (MQLKIQLLMLVLMTVLTGVLG). Positions 22 to 85 (KDGYVVHEDT…VYGDKGTYCW (64 aa)) constitute an LCN-type CS-alpha/beta domain. 4 disulfides stabilise this stretch: C33-C84, C37-C60, C46-C65, and C50-C67.

The protein belongs to the long (4 C-C) scorpion toxin superfamily. Sodium channel inhibitor family. Alpha subfamily. As to expression, expressed by the venom gland.

The protein localises to the secreted. Functionally, binds voltage-independently at site-3 of voltage-gated sodium channels (Nav) and inhibits the inactivation of the activated channels, thereby blocking neuronal transmission. This Lychas mucronatus (Chinese swimming scorpion) protein is Neurotoxin LmNaTx35.2.